A 294-amino-acid chain; its full sequence is MHPRFQTAFAQLADNLQSALAPILADHHFPAMLTAEQVSTLKNTAGLDEDALAFALLPLAAACARTDLSHFNVGAIARGVSGNWYFGANMEFLGTTMQQTVHAEQSAISHAWLRGEKGLAAVTVNYTPCGHCRQFMNELNSGLDLRIHLPGRAPHTLRDYLPDAFGPKDLEIKTLLMDEQDHGFTLTGDTLTQAAITAANKSHMPYSHSPSGVALECKDGRIFTGSYAENAAFNPTLPPLQGALNLLSLNGYDYADIQRAILAEKGDAALIQWDATAATLKALGCHNIDRVLLG.

CMP/dCMP-type deaminase domains are found at residues 48–168 and 186–294; these read DEDA…FGPK and LTGD…VLLG. 89 to 91 serves as a coordination point for substrate; the sequence is NME. Histidine 102 is a binding site for Zn(2+). The Proton donor role is filled by glutamate 104. Zn(2+) contacts are provided by cysteine 129 and cysteine 132.

The protein belongs to the cytidine and deoxycytidylate deaminase family. As to quaternary structure, homodimer. Zn(2+) serves as cofactor.

It carries out the reaction cytidine + H2O + H(+) = uridine + NH4(+). It catalyses the reaction 2'-deoxycytidine + H2O + H(+) = 2'-deoxyuridine + NH4(+). Functionally, this enzyme scavenges exogenous and endogenous cytidine and 2'-deoxycytidine for UMP synthesis. This chain is Cytidine deaminase, found in Salmonella schwarzengrund (strain CVM19633).